The following is an 87-amino-acid chain: MANTAQARKRARQAVKQNAHNSSQRSTLRTAVKAVRKAIEAGDKAAAAQVFLASVSTIDRIADKKIIHKNKAARHKSRLAAALKALA.

Residues 1-29 (MANTAQARKRARQAVKQNAHNSSQRSTLR) are disordered. A compositionally biased stretch (polar residues) spans 20 to 29 (HNSSQRSTLR).

It belongs to the bacterial ribosomal protein bS20 family.

Functionally, binds directly to 16S ribosomal RNA. The polypeptide is Small ribosomal subunit protein bS20 (Janthinobacterium sp. (strain Marseille) (Minibacterium massiliensis)).